The chain runs to 684 residues: Coiled-coil domain-containing protein 62 (684 aa).

Coiled-coil stretches lie at residues 11–160 (RQNI…QALT) and 199–322 (TCIV…ESKA). The interval 579–603 (SLGSSKSALREDETESSSNKKNSPT) is disordered. Polar residues predominate over residues 594–603 (SSSNKKNSPT). Short sequence motifs (LXXLL motif) lie at residues 634–638 (LQRLL) and 650–654 (LSTLL). Positions 657–684 (SHENLTGSATNKSEVPEESAQKNTFVSY) are disordered. The segment covering 659–669 (ENLTGSATNKS) has biased composition (polar residues).

Interacts with ESR1 and ESR2 in the presence of estradiol/E2. The interaction with ESR2 recruits CCDC62 to ER target genes, including cyclin-D1/CCND1 AP-1 promoter. Interacts with GOPC. Highly expressed in adult testis. Expressed in both prostate epithelial and stromal cells, with predominant expression in epithelial cells (at protein level). Not detected in prostate by RT-PCR. Overexpressed in various cancers.

The protein resides in the cytoplasm. It is found in the nucleus. It localises to the cytoplasmic vesicle. Its subcellular location is the secretory vesicle. The protein localises to the acrosome. Nuclear receptor coactivator that can enhance preferentially estrogen receptors ESR1 and ESR2 transactivation. Also modulates progesterone/PGR, glucocorticoid/NR3C1 and androgen/AR receptors transactivation, although at lower level; little effect on vitamin D receptor/VDR. Required for normal spermiogenesis. It probably plays a role in acrosome formation. The protein is Coiled-coil domain-containing protein 62 (CCDC62) of Homo sapiens (Human).